The sequence spans 724 residues: MEHNKAGSSGQCPVMHGGLTSASMSNMDWWPKALNLDILHQHDSKTNPLGADFNYREELKKLDVEALKRDLKALMTNSQEWWPADWGHYGGLMIRMAWHSAGTYRIADGRGGGGTGNQRFAPLNSWPDNANLDKARRLLWPIKQKYGNKISWADLMILAGNMAYESMGLKTFGFAFGREDIWHPEKDIYWGSEKEWLAKSGGENSRYSGQRDLENPLATVMMGLIYVNPEGVDGNPDPLKTAQDMRVTFARMAMNDEETVALTAGGHTVGKAHGNGKASNLGPDPEGAELHEQGLGWNNHTSRGIGRNTVTSGIEGAWTTHPTRWDNEYFYLLLSYEWQLTKSPAGAWQWEPVNIKEEDKPVDVEDPSIRYNPMMTDADMALKIDPEYRKISERFYKDPAYFSEVFARAWFKLTHRDMGPKARYFGPDVPAEDLIWQDPVPAGRKDYDVNAVKAKIAASGLSISEMVSTAWDSARTFRGSDKRGGANGARIRLAPQKDWEGNEPARLGKVLAVLEKIAAESGISIADTIVLAGNVGIEQAAKAAGVNVTVPFAPGRGDATIEQTDVESFEVLEPLADGFRNWQKKHYVVTPEEMLLDKAQLLRLTAPEMTVLIGGMRVLGTNYGGSQHGVFTDRVGALTNDFFVNLTDMSYTWKPTGRNSYEIVERKSGKVKWTATRVDLVFGSNSILRAYAEVYAQDDNKEKFVKDFVAAWTKVMNADRFDLV.

Positions tryptophan 98–tyrosine 226 form a cross-link, tryptophyl-tyrosyl-methioninium (Trp-Tyr) (with M-252). The active-site Proton acceptor is the histidine 99. The tryptophyl-tyrosyl-methioninium (Tyr-Met) (with W-98) cross-link spans tyrosine 226–methionine 252. A heme b-binding site is contributed by histidine 267.

Belongs to the peroxidase family. Peroxidase/catalase subfamily. Homodimer or homotetramer. Heme b serves as cofactor. In terms of processing, formation of the three residue Trp-Tyr-Met cross-link is important for the catalase, but not the peroxidase activity of the enzyme.

It carries out the reaction H2O2 + AH2 = A + 2 H2O. The catalysed reaction is 2 H2O2 = O2 + 2 H2O. Functionally, bifunctional enzyme with both catalase and broad-spectrum peroxidase activity. This chain is Catalase-peroxidase, found in Vibrio cholerae serotype O1 (strain ATCC 39541 / Classical Ogawa 395 / O395).